A 546-amino-acid chain; its full sequence is Amidase FG08078 (546 aa).

Residues K129 and S204 each act as charge relay system in the active site. Catalysis depends on S228, which acts as the Acyl-ester intermediate.

This sequence belongs to the amidase family.

Its pathway is mycotoxin biosynthesis. Functionally, amidase; part of the gene cluster that mediates the biosynthesis of butenolide, a mycotoxin that shows antibiotic activity but does not seem to play a major role in the spread of head blight in wheat. Butenolide is derived from glutamic acid via a 4-acetamido-2-butenoic acid intermediate. The predicted function of the NADH:flavin oxidoreductase FG08077, the cytochrome P450 monooxygenase FG08079, the decarboxylase FG08083, and the putative acetyltransferase FG08082 are consistent with this pathway, however, the respective activities of the butelonide biosynthesis cluster enzymes have still to be experimentally determined. This chain is Amidase FG08078, found in Gibberella zeae (strain ATCC MYA-4620 / CBS 123657 / FGSC 9075 / NRRL 31084 / PH-1) (Wheat head blight fungus).